Reading from the N-terminus, the 37-residue chain is Large ribosomal subunit protein bL36 (37 aa).

This sequence belongs to the bacterial ribosomal protein bL36 family.

The polypeptide is Large ribosomal subunit protein bL36 (Nitratiruptor sp. (strain SB155-2)).